A 302-amino-acid polypeptide reads, in one-letter code: Lipooligosaccharide biosynthesis protein lex-1 (302 aa).

7 consecutive repeat copies span residues 42–45 (SINQ), 46–49 (SINQ), 50–53 (SINQ), 54–57 (SINQ), 58–61 (SINQ), 62–65 (SINQ), and 66–69 (SINQ). The interval 42–69 (SINQSINQSINQSINQSINQSINQSINQ) is 7 X 4 AA tandem repeats of S-I-N-Q.

It belongs to the glycosyltransferase 25 family.

In terms of biological role, involved in extracellular lipooligosaccharide (LOS) biosynthesis and virulence expression. Involved in the synthesis of the oligosaccharide moiety of the LOS molecule by adding GalNAc. This is Lipooligosaccharide biosynthesis protein lex-1 (lex1) from Haemophilus influenzae (strain ATCC 51907 / DSM 11121 / KW20 / Rd).